A 343-amino-acid polypeptide reads, in one-letter code: 4-hydroxy-2-oxovalerate aldolase 1 (343 aa).

The region spanning 8 to 260 is the Pyruvate carboxyltransferase domain; it reads VTVHDMTLRD…ETGVDVAKIT (253 aa). 16–17 is a binding site for substrate; the sequence is RD. D17 provides a ligand contact to Mn(2+). H20 (proton acceptor) is an active-site residue. Substrate contacts are provided by S170 and H199. Mn(2+)-binding residues include H199 and H201. Residue Y290 coordinates substrate.

The protein belongs to the 4-hydroxy-2-oxovalerate aldolase family.

The enzyme catalyses (S)-4-hydroxy-2-oxopentanoate = acetaldehyde + pyruvate. The chain is 4-hydroxy-2-oxovalerate aldolase 1 from Dechloromonas aromatica (strain RCB).